A 399-amino-acid chain; its full sequence is Tryptophan synthase beta chain (399 aa).

K92 carries the N6-(pyridoxal phosphate)lysine modification.

The protein belongs to the TrpB family. As to quaternary structure, tetramer of two alpha and two beta chains. Requires pyridoxal 5'-phosphate as cofactor.

The enzyme catalyses (1S,2R)-1-C-(indol-3-yl)glycerol 3-phosphate + L-serine = D-glyceraldehyde 3-phosphate + L-tryptophan + H2O. The protein operates within amino-acid biosynthesis; L-tryptophan biosynthesis; L-tryptophan from chorismate: step 5/5. Its function is as follows. The beta subunit is responsible for the synthesis of L-tryptophan from indole and L-serine. This is Tryptophan synthase beta chain from Legionella pneumophila subsp. pneumophila (strain Philadelphia 1 / ATCC 33152 / DSM 7513).